The primary structure comprises 134 residues: ATP synthase epsilon chain (134 aa).

Belongs to the ATPase epsilon chain family. In terms of assembly, F-type ATPases have 2 components, CF(1) - the catalytic core - and CF(0) - the membrane proton channel. CF(1) has five subunits: alpha(3), beta(3), gamma(1), delta(1), epsilon(1). CF(0) has three main subunits: a, b and c.

Its subcellular location is the cellular thylakoid membrane. Functionally, produces ATP from ADP in the presence of a proton gradient across the membrane. This Prochlorococcus marinus (strain MIT 9301) protein is ATP synthase epsilon chain.